The sequence spans 422 residues: Serine hydroxymethyltransferase (422 aa).

(6S)-5,6,7,8-tetrahydrofolate-binding positions include L113 and 117-119 (GHL). At K222 the chain carries N6-(pyridoxal phosphate)lysine.

The protein belongs to the SHMT family. In terms of assembly, homodimer. Pyridoxal 5'-phosphate serves as cofactor.

The protein localises to the cytoplasm. It catalyses the reaction (6R)-5,10-methylene-5,6,7,8-tetrahydrofolate + glycine + H2O = (6S)-5,6,7,8-tetrahydrofolate + L-serine. It participates in one-carbon metabolism; tetrahydrofolate interconversion. It functions in the pathway amino-acid biosynthesis; glycine biosynthesis; glycine from L-serine: step 1/1. Its function is as follows. Catalyzes the reversible interconversion of serine and glycine with tetrahydrofolate (THF) serving as the one-carbon carrier. This reaction serves as the major source of one-carbon groups required for the biosynthesis of purines, thymidylate, methionine, and other important biomolecules. Also exhibits THF-independent aldolase activity toward beta-hydroxyamino acids, producing glycine and aldehydes, via a retro-aldol mechanism. This chain is Serine hydroxymethyltransferase, found in Amoebophilus asiaticus (strain 5a2).